Reading from the N-terminus, the 145-residue chain is Monooxygenase AacuP (145 aa).

It belongs to the avfA family.

The protein operates within secondary metabolite biosynthesis. In terms of biological role, monooxygenase; part of the gene cluster that mediates the biosynthesis of the tetrahydroxanthone dimer secalonic acid D. The pathway begins with the synthesis of atrochrysone thioester by the polyketide synthase AacuL. The atrochrysone carboxyl ACP thioesterase AacuM then breaks the thioester bond and releases the atrochrysone carboxylic acid from AacuL. Atrochrysone carboxylic acid is decarboxylated by the decarboxylase AacuI, and oxidized by the anthrone oxygenase AacuG to yield emodin. Emodin is then reduced to emodin hydroquinone by a yet unidentified oxidoreductase. A-ring reduction by the short chain dehydrogenase AacuN, dehydration by the scytalone dehydratase-like protein AacuK and probable spontaneous re-oxidation, results in overall deoxygenation to chrysophanol. Baeyer-Villiger oxidation by the Baeyer-Villiger monooxygenase (BVMO) AacuH then yields monodictyphenone. Monodictyphenone is transformed into compounds with the tetrahydroxanthone skeleton via methylesterification by the methyltransferase AacuQ, followed by the action of the flavin-dependent monooxygenase AacuC, the isomerase AacuP, and the short chain dehydrogenase/reductase AacuF or AacuD. AacuF and AacuD should accept the same compound as a substrate but perform the ketoreduction with a different stereoselectivity, thus yielding blennolides B and A, respectively. In the final step of the biosynthesis, the cytochrome P450 monooxygenase AacuE accepts blennolide B and/or blennolide A to conduct the dimerization reaction to furnish the tetrahydroxanthone dimers, secalonic acids D, B, and F. In Aspergillus aculeatus (strain ATCC 16872 / CBS 172.66 / WB 5094), this protein is Monooxygenase AacuP.